Consider the following 579-residue polypeptide: Kelch repeat and BTB domain-containing protein F47D12.7 (579 aa).

In terms of domain architecture, BTB spans 51–119 (PTVTLVLRNN…PKAFEQGIKP (69 aa)). 6 Kelch repeats span residues 266 to 316 (AIVC…VVED), 317 to 363 (KLIV…RVND), 369 to 415 (LVFA…TIDN), 417 to 463 (IVAI…SIMN), 465 to 511 (VCMI…QMDT), and 513 to 559 (YVYV…TLSD).

This chain is Kelch repeat and BTB domain-containing protein F47D12.7, found in Caenorhabditis elegans.